The primary structure comprises 320 residues: o-succinylbenzoate synthase (320 aa).

Residue Lys133 is the Proton donor of the active site. Residues Asp161, Glu190, and Asp213 each coordinate Mg(2+). Lys235 (proton acceptor) is an active-site residue.

This sequence belongs to the mandelate racemase/muconate lactonizing enzyme family. MenC type 1 subfamily. The cofactor is a divalent metal cation.

The enzyme catalyses (1R,6R)-6-hydroxy-2-succinyl-cyclohexa-2,4-diene-1-carboxylate = 2-succinylbenzoate + H2O. It participates in quinol/quinone metabolism; 1,4-dihydroxy-2-naphthoate biosynthesis; 1,4-dihydroxy-2-naphthoate from chorismate: step 4/7. Its pathway is quinol/quinone metabolism; menaquinone biosynthesis. Converts 2-succinyl-6-hydroxy-2,4-cyclohexadiene-1-carboxylate (SHCHC) to 2-succinylbenzoate (OSB). The protein is o-succinylbenzoate synthase of Escherichia coli (strain SMS-3-5 / SECEC).